The primary structure comprises 315 residues: Homoserine kinase (315 aa).

97-107 (PPARGLGSSAT) serves as a coordination point for ATP.

The protein belongs to the GHMP kinase family. Homoserine kinase subfamily.

The protein resides in the cytoplasm. It carries out the reaction L-homoserine + ATP = O-phospho-L-homoserine + ADP + H(+). It participates in amino-acid biosynthesis; L-threonine biosynthesis; L-threonine from L-aspartate: step 4/5. Catalyzes the ATP-dependent phosphorylation of L-homoserine to L-homoserine phosphate. The chain is Homoserine kinase from Synechococcus sp. (strain WH7803).